Consider the following 961-residue polypeptide: Retinoblastoma-related protein 1 (961 aa).

Residues 404–606 (TPVSTAMTTA…EKGSSMYNSL (203 aa)) are domain A. Residues 404–819 (TPVSTAMTTA…NEMFIPSVKP (416 aa)) form a pocket region. The tract at residues 607 to 728 (AVAKPSLAAE…PGGGGETCAE (122 aa)) is spacer. The segment at 729–819 (TAINVFFGKI…NEMFIPSVKP (91 aa)) is domain B. The disordered stretch occupies residues 829–856 (NAEKNNHNDGQGPASPKPSPFPKLPDMS).

It belongs to the retinoblastoma protein (RB) family.

It localises to the nucleus. Functionally, regulator of biological processes that recruits a histone deacetylase to control gene transcription. May play a role in the entry into mitosis, negatively regulating the cell proliferation. Formation of stable complexes with geminiviridae replication-associated proteins may create a cellular environment which favors viral DNA replication. This Nicotiana tabacum (Common tobacco) protein is Retinoblastoma-related protein 1 (RB1).